A 515-amino-acid chain; its full sequence is uncharacterized protein (515 aa).

3 helical membrane-spanning segments follow: residues 1–21 (MSFV…LAGI), 165–185 (IGGP…GLLF), and 199–219 (GPVG…GLFG). A PE domain is found at 1–93 (MSFVVAAPEV…AGAYAGAEAA (93 aa)). Gly residues predominate over residues 349 to 360 (GGTLIGNGGDGG). Disordered regions lie at residues 349–368 (GGTL…TDGF) and 463–515 (GVSG…SPGG).

Belongs to the mycobacterial PE family. PGRS subfamily.

It localises to the cell membrane. This is an uncharacterized protein from Mycobacterium tuberculosis (strain CDC 1551 / Oshkosh).